A 143-amino-acid chain; its full sequence is Snake venom vascular endothelial growth factor toxin (143 aa).

The signal sequence occupies residues 1-24 (MAAYLLAVAILFCIQGWPSATVQG). The residue at position 25 (Q25) is a Pyrrolidone carboxylic acid. 3 disulfides stabilise this stretch: C38–C80, C69–C115, and C73–C117. The tract at residues 115 to 143 (CECRPRSPGDVNNGRNPEEGEPRARFPFV) is disordered. The segment covering 130–143 (NPEEGEPRARFPFV) has biased composition (basic and acidic residues).

The protein belongs to the PDGF/VEGF growth factor family. Snake venom VEGF subfamily. As to quaternary structure, homodimer; disulfide-linked. Interacts with VEGF receptor-2 (KDR). The N-terminus is blocked for N-terminal sequencing, suggesting a Pyrrolidone carboxylic acid at Gln-25. In terms of tissue distribution, expressed by the venom gland.

The protein resides in the secreted. In terms of biological role, snake venom VEGFs that may contribute to venom dispersion and prey subjugation by inducing vascular permeability and hypotension. This protein induces an increase in capillary permeability when intradermally injected into mice. Also provokes a drastic hypotensive effect after intravenous injection. The hypotension is mediated by nitric oxide (NO), which is produced by VEGF-activated endothelium NO synthase. Also induces angiogenesis in vitro. Unlike other crotalid VEGFs, this protein interacts with VEGF receptor-2 (KDR) with a high affinity (Kd=413 pM), whereas no interaction is detected with VEGF receptor-1 (FLT1). This is Snake venom vascular endothelial growth factor toxin from Protobothrops jerdonii (Jerdon's pitviper).